We begin with the raw amino-acid sequence, 71 residues long: MKKDIHPKTFKATIRCHCGFEAQALSTKGELVQVEVCSNCHPFFTGKQRFLDTAGRIDRFRKKYANFEKKA.

Residues cysteine 16, cysteine 18, cysteine 37, and cysteine 40 each coordinate Zn(2+).

The protein belongs to the bacterial ribosomal protein bL31 family. Type A subfamily. In terms of assembly, part of the 50S ribosomal subunit. Zn(2+) is required as a cofactor.

In terms of biological role, binds the 23S rRNA. The chain is Large ribosomal subunit protein bL31 from Solidesulfovibrio magneticus (strain ATCC 700980 / DSM 13731 / RS-1) (Desulfovibrio magneticus).